The chain runs to 121 residues: Large ribosomal subunit protein bL12 (121 aa).

This sequence belongs to the bacterial ribosomal protein bL12 family. Homodimer. Part of the ribosomal stalk of the 50S ribosomal subunit. Forms a multimeric L10(L12)X complex, where L10 forms an elongated spine to which 2 to 4 L12 dimers bind in a sequential fashion. Binds GTP-bound translation factors.

In terms of biological role, forms part of the ribosomal stalk which helps the ribosome interact with GTP-bound translation factors. Is thus essential for accurate translation. The sequence is that of Large ribosomal subunit protein bL12 from Ureaplasma parvum serovar 3 (strain ATCC 27815 / 27 / NCTC 11736).